The primary structure comprises 953 residues: 26S proteasome non-ATPase regulatory subunit 1 (953 aa).

Residue Met-1 is modified to N-acetylmethionine. Thr-273 is subject to Phosphothreonine. Positions 279-318 (PGSTNTGTVPGSEKDSDSMETEEKTSSAFVGKTPEASPEP) are disordered. The residue at position 290 (Ser-290) is a Phosphoserine. A compositionally biased stretch (basic and acidic residues) spans 290–303 (SEKDSDSMETEEKT). Position 310 is an N6-acetyllysine (Lys-310). A Phosphothreonine modification is found at Thr-311. At Ser-315 the chain carries Phosphoserine. 10 PC repeats span residues 403–436 (TATA…PGSA), 441–474 (GGLY…DIVR), 476–510 (GGSL…VTGE), 511–545 (AAGL…EKIL), 547–580 (GLAV…ILRR), 581–616 (SGMY…DVRR), 617–649 (AAVE…PHVR), 651–685 (GAAM…YVRQ), 686–726 (GALI…DVMA), and 729–761 (GAIL…PSVV). Lys-720 carries the N6-acetyllysine modification. Thr-830 carries the post-translational modification Phosphothreonine. At Ser-834 the chain carries Phosphoserine. 2 disordered regions span residues 839-881 (AKKK…LDNP) and 930-953 (AHGP…YIDD). 2 stretches are compositionally biased toward basic and acidic residues: residues 842-852 (KEKEKEKKEEE) and 859-872 (AEKK…KEPE). Over residues 936–953 (EEEEQEPEPPEPFEYIDD) the composition is skewed to acidic residues.

The protein belongs to the proteasome subunit S1 family. Component of the 19S proteasome regulatory particle complex. The 26S proteasome consists of a 20S core particle (CP) and two 19S regulatory subunits (RP). The regulatory particle is made of a lid composed of 9 subunits, a base containing 6 ATPases and few additional components including PSMD1. Interacts with ADRM1. Interacts with ZFAND1.

Component of the 26S proteasome, a multiprotein complex involved in the ATP-dependent degradation of ubiquitinated proteins. This complex plays a key role in the maintenance of protein homeostasis by removing misfolded or damaged proteins, which could impair cellular functions, and by removing proteins whose functions are no longer required. Therefore, the proteasome participates in numerous cellular processes, including cell cycle progression, apoptosis, or DNA damage repair. This chain is 26S proteasome non-ATPase regulatory subunit 1 (PSMD1), found in Homo sapiens (Human).